The following is a 360-amino-acid chain: Phospho-N-acetylmuramoyl-pentapeptide-transferase (360 aa).

Transmembrane regions (helical) follow at residues 26–46 (AILG…WVIN), 70–90 (GTPT…TLLW), 97–117 (YVLA…VDDY), 134–154 (YFWQ…TAQI), 167–187 (GVAL…VVGF), 199–219 (GLAI…AYLV), 236–256 (AGEL…FLWF), 263–283 (VFMG…IAVI), 288–308 (IVFI…ILQV), and 338–358 (VIVR…ATLK).

Belongs to the glycosyltransferase 4 family. MraY subfamily. Mg(2+) is required as a cofactor.

The protein localises to the cell inner membrane. The enzyme catalyses UDP-N-acetyl-alpha-D-muramoyl-L-alanyl-gamma-D-glutamyl-meso-2,6-diaminopimeloyl-D-alanyl-D-alanine + di-trans,octa-cis-undecaprenyl phosphate = di-trans,octa-cis-undecaprenyl diphospho-N-acetyl-alpha-D-muramoyl-L-alanyl-D-glutamyl-meso-2,6-diaminopimeloyl-D-alanyl-D-alanine + UMP. It functions in the pathway cell wall biogenesis; peptidoglycan biosynthesis. Functionally, catalyzes the initial step of the lipid cycle reactions in the biosynthesis of the cell wall peptidoglycan: transfers peptidoglycan precursor phospho-MurNAc-pentapeptide from UDP-MurNAc-pentapeptide onto the lipid carrier undecaprenyl phosphate, yielding undecaprenyl-pyrophosphoryl-MurNAc-pentapeptide, known as lipid I. This chain is Phospho-N-acetylmuramoyl-pentapeptide-transferase, found in Saccharophagus degradans (strain 2-40 / ATCC 43961 / DSM 17024).